The sequence spans 311 residues: tRNA dimethylallyltransferase (311 aa).

10–17 (GPTAVGKT) contributes to the ATP binding site. 12–17 (TAVGKT) lines the substrate pocket. The tract at residues 35–38 (DSMQ) is interaction with substrate tRNA.

This sequence belongs to the IPP transferase family. Monomer. Mg(2+) serves as cofactor.

It carries out the reaction adenosine(37) in tRNA + dimethylallyl diphosphate = N(6)-dimethylallyladenosine(37) in tRNA + diphosphate. Catalyzes the transfer of a dimethylallyl group onto the adenine at position 37 in tRNAs that read codons beginning with uridine, leading to the formation of N6-(dimethylallyl)adenosine (i(6)A). This chain is tRNA dimethylallyltransferase, found in Anoxybacillus flavithermus (strain DSM 21510 / WK1).